Reading from the N-terminus, the 333-residue chain is MIEIDRLVSTDVLNENEALVDRAIRPKRLDEYVGQSHVRDQMQIFIQAAKQRGDALDHLLIFGPPGLGKTTLANIVAHEMGVNLRTTSGPVLEKAGDLAALLTHLEPRDALFIDEIHRLSPVVEEILYPAMEDYQLDIMIGEGPGARSIKLDLPPFTLIGATTRAGSLTSPLRDRFGIVQRLEFYSVPDLEHIVSRSARCLQLPLTKNGAHQLALRSRGTPRIINRLLRRVRDFAEVKGEGKINTEIAIKALEMLNVDKEGLDYMDSKLLLAIIEKFQGGPVGLDNLAAAIGEERETIEDVLEPYLIQQGFIQRTPRGRIATQHAYQHFICGG.

The tract at residues I4 to Y185 is large ATPase domain (RuvB-L). ATP contacts are provided by residues I24, R25, G66, K69, T70, T71, E132 to Y134, R175, Y185, and R222. T70 lines the Mg(2+) pocket. Residues S186–N256 are small ATPAse domain (RuvB-S). A head domain (RuvB-H) region spans residues K259 to G333. 3 residues coordinate DNA: R295, R314, and R319.

This sequence belongs to the RuvB family. Homohexamer. Forms an RuvA(8)-RuvB(12)-Holliday junction (HJ) complex. HJ DNA is sandwiched between 2 RuvA tetramers; dsDNA enters through RuvA and exits via RuvB. An RuvB hexamer assembles on each DNA strand where it exits the tetramer. Each RuvB hexamer is contacted by two RuvA subunits (via domain III) on 2 adjacent RuvB subunits; this complex drives branch migration. In the full resolvosome a probable DNA-RuvA(4)-RuvB(12)-RuvC(2) complex forms which resolves the HJ.

It localises to the cytoplasm. The catalysed reaction is ATP + H2O = ADP + phosphate + H(+). Functionally, the RuvA-RuvB-RuvC complex processes Holliday junction (HJ) DNA during genetic recombination and DNA repair, while the RuvA-RuvB complex plays an important role in the rescue of blocked DNA replication forks via replication fork reversal (RFR). RuvA specifically binds to HJ cruciform DNA, conferring on it an open structure. The RuvB hexamer acts as an ATP-dependent pump, pulling dsDNA into and through the RuvAB complex. RuvB forms 2 homohexamers on either side of HJ DNA bound by 1 or 2 RuvA tetramers; 4 subunits per hexamer contact DNA at a time. Coordinated motions by a converter formed by DNA-disengaged RuvB subunits stimulates ATP hydrolysis and nucleotide exchange. Immobilization of the converter enables RuvB to convert the ATP-contained energy into a lever motion, pulling 2 nucleotides of DNA out of the RuvA tetramer per ATP hydrolyzed, thus driving DNA branch migration. The RuvB motors rotate together with the DNA substrate, which together with the progressing nucleotide cycle form the mechanistic basis for DNA recombination by continuous HJ branch migration. Branch migration allows RuvC to scan DNA until it finds its consensus sequence, where it cleaves and resolves cruciform DNA. The protein is Holliday junction branch migration complex subunit RuvB of Hamiltonella defensa subsp. Acyrthosiphon pisum (strain 5AT).